Here is a 299-residue protein sequence, read N- to C-terminus: GTPase Era (299 aa).

The Era-type G domain maps to 5–175 (RSGFVCFVGR…TNVLVSQLPP (171 aa)). The segment at 13 to 20 (GRPNTGKS) is G1. 13-20 (GRPNTGKS) serves as a coordination point for GTP. Residues 39 to 43 (QTTRH) are G2. A G3 region spans residues 60–63 (DTPG). GTP contacts are provided by residues 60 to 64 (DTPGL) and 124 to 127 (TKID). Residues 124–127 (TKID) are G4. Residues 154 to 156 (VSA) form a G5 region. The 80-residue stretch at 206-285 (VRDELPHSLA…YLDLRVKIAK (80 aa)) folds into the KH type-2 domain.

It belongs to the TRAFAC class TrmE-Era-EngA-EngB-Septin-like GTPase superfamily. Era GTPase family. In terms of assembly, monomer. Stays in the monomer conformation, irrespective of the presence of GTP.

It localises to the cell envelope. It is found in the secreted. The protein localises to the cell wall. Its activity is regulated as follows. Co-purified with RNA upon overexpression in E.coli, but RNAs do not appear to influence the GTPase activity. Exhibits GTPase activity. Binds RNA but is probably not involved in ribosome assembly in mycobacteria. Cannot use ATP. In Mycolicibacterium smegmatis (strain ATCC 700084 / mc(2)155) (Mycobacterium smegmatis), this protein is GTPase Era.